A 146-amino-acid chain; its full sequence is Large ribosomal subunit protein uL15 (146 aa).

Residues 1–54 are disordered; that stretch reads MTIKLHDLRPAPGSKTPRTRVGRGEGSKGKTAGRGTKGTKARKQVPTTFEGGQM.

The protein belongs to the universal ribosomal protein uL15 family. As to quaternary structure, part of the 50S ribosomal subunit.

Binds to the 23S rRNA. The chain is Large ribosomal subunit protein uL15 from Mycobacterium marinum (strain ATCC BAA-535 / M).